The sequence spans 99 residues: Malonate decarboxylase acyl carrier protein (99 aa).

An O-(phosphoribosyl dephospho-coenzyme A)serine modification is found at Ser25.

The protein belongs to the MdcC family. Post-translationally, covalently binds the prosthetic group of malonate decarboxylase.

It is found in the cytoplasm. In terms of biological role, subunit of malonate decarboxylase, it is an acyl carrier protein to which acetyl and malonyl thioester residues are bound via a 2'-(5''-phosphoribosyl)-3'-dephospho-CoA prosthetic group and turn over during the catalytic mechanism. The chain is Malonate decarboxylase acyl carrier protein from Pseudomonas putida (strain W619).